The following is a 371-amino-acid chain: Poly(rC)-binding protein 3 (371 aa).

KH domains are found at residues 45–95 (TLTI…TITG), 129–182 (PVTL…TISG), and 293–357 (ASTH…QYLI).

Its subcellular location is the cytoplasm. Its function is as follows. Single-stranded nucleic acid binding protein that binds preferentially to oligo dC. This chain is Poly(rC)-binding protein 3, found in Homo sapiens (Human).